A 432-amino-acid chain; its full sequence is Serine--tRNA ligase (432 aa).

L-serine is bound at residue 237–239 (TSE). 268–270 (RSE) serves as a coordination point for ATP. Glu-291 contacts L-serine. Position 355–358 (355–358 (EISS)) interacts with ATP. An L-serine-binding site is contributed by Ser-390.

Belongs to the class-II aminoacyl-tRNA synthetase family. Type-1 seryl-tRNA synthetase subfamily. Homodimer. The tRNA molecule binds across the dimer.

It localises to the cytoplasm. It carries out the reaction tRNA(Ser) + L-serine + ATP = L-seryl-tRNA(Ser) + AMP + diphosphate + H(+). The enzyme catalyses tRNA(Sec) + L-serine + ATP = L-seryl-tRNA(Sec) + AMP + diphosphate + H(+). Its pathway is aminoacyl-tRNA biosynthesis; selenocysteinyl-tRNA(Sec) biosynthesis; L-seryl-tRNA(Sec) from L-serine and tRNA(Sec): step 1/1. Functionally, catalyzes the attachment of serine to tRNA(Ser). Is also able to aminoacylate tRNA(Sec) with serine, to form the misacylated tRNA L-seryl-tRNA(Sec), which will be further converted into selenocysteinyl-tRNA(Sec). The polypeptide is Serine--tRNA ligase (Methylobacillus flagellatus (strain ATCC 51484 / DSM 6875 / VKM B-1610 / KT)).